We begin with the raw amino-acid sequence, 85 residues long: Conotoxin Lt28.7 (85 aa).

An N-terminal signal peptide occupies residues 1-21 (MPKLEMMLLVLLILPLCYIDA). A propeptide spanning residues 22 to 40 (VGPPPPWNMEDEIIEHWQE) is cleaved from the precursor.

This sequence belongs to the conotoxin D superfamily. Contains 5 disulfide bonds. As to expression, expressed by the venom duct.

It is found in the secreted. In terms of biological role, probable neurotoxin. This Conus litteratus (Lettered cone) protein is Conotoxin Lt28.7.